Consider the following 140-residue polypeptide: Nucleoside diphosphate kinase (140 aa).

ATP-binding residues include Lys11, Phe59, Arg87, Thr93, Arg104, and Asn114. His117 (pros-phosphohistidine intermediate) is an active-site residue.

Belongs to the NDK family. As to quaternary structure, homotetramer. It depends on Mg(2+) as a cofactor.

Its subcellular location is the cytoplasm. It catalyses the reaction a 2'-deoxyribonucleoside 5'-diphosphate + ATP = a 2'-deoxyribonucleoside 5'-triphosphate + ADP. It carries out the reaction a ribonucleoside 5'-diphosphate + ATP = a ribonucleoside 5'-triphosphate + ADP. In terms of biological role, major role in the synthesis of nucleoside triphosphates other than ATP. The ATP gamma phosphate is transferred to the NDP beta phosphate via a ping-pong mechanism, using a phosphorylated active-site intermediate. This Rhodopseudomonas palustris (strain ATCC BAA-98 / CGA009) protein is Nucleoside diphosphate kinase.